Here is a 282-residue protein sequence, read N- to C-terminus: 4-hydroxy-3-methylbut-2-enyl diphosphate reductase (282 aa).

A [4Fe-4S] cluster-binding site is contributed by cysteine 12. (2E)-4-hydroxy-3-methylbut-2-enyl diphosphate is bound by residues histidine 40 and histidine 72. Residues histidine 40 and histidine 72 each coordinate dimethylallyl diphosphate. The isopentenyl diphosphate site is built by histidine 40 and histidine 72. Cysteine 94 serves as a coordination point for [4Fe-4S] cluster. Histidine 122 is a binding site for (2E)-4-hydroxy-3-methylbut-2-enyl diphosphate. Histidine 122 contacts dimethylallyl diphosphate. Histidine 122 provides a ligand contact to isopentenyl diphosphate. Glutamate 124 functions as the Proton donor in the catalytic mechanism. Threonine 160 contributes to the (2E)-4-hydroxy-3-methylbut-2-enyl diphosphate binding site. Cysteine 188 contributes to the [4Fe-4S] cluster binding site. (2E)-4-hydroxy-3-methylbut-2-enyl diphosphate contacts are provided by serine 216, asparagine 218, and serine 260. Dimethylallyl diphosphate contacts are provided by serine 216, asparagine 218, and serine 260. Positions 216, 218, and 260 each coordinate isopentenyl diphosphate.

Belongs to the IspH family. Requires [4Fe-4S] cluster as cofactor.

The catalysed reaction is isopentenyl diphosphate + 2 oxidized [2Fe-2S]-[ferredoxin] + H2O = (2E)-4-hydroxy-3-methylbut-2-enyl diphosphate + 2 reduced [2Fe-2S]-[ferredoxin] + 2 H(+). It carries out the reaction dimethylallyl diphosphate + 2 oxidized [2Fe-2S]-[ferredoxin] + H2O = (2E)-4-hydroxy-3-methylbut-2-enyl diphosphate + 2 reduced [2Fe-2S]-[ferredoxin] + 2 H(+). Its pathway is isoprenoid biosynthesis; dimethylallyl diphosphate biosynthesis; dimethylallyl diphosphate from (2E)-4-hydroxy-3-methylbutenyl diphosphate: step 1/1. It functions in the pathway isoprenoid biosynthesis; isopentenyl diphosphate biosynthesis via DXP pathway; isopentenyl diphosphate from 1-deoxy-D-xylulose 5-phosphate: step 6/6. Functionally, catalyzes the conversion of 1-hydroxy-2-methyl-2-(E)-butenyl 4-diphosphate (HMBPP) into a mixture of isopentenyl diphosphate (IPP) and dimethylallyl diphosphate (DMAPP). Acts in the terminal step of the DOXP/MEP pathway for isoprenoid precursor biosynthesis. The sequence is that of 4-hydroxy-3-methylbut-2-enyl diphosphate reductase from Geotalea uraniireducens (strain Rf4) (Geobacter uraniireducens).